Consider the following 201-residue polypeptide: ATP-dependent Clp protease proteolytic subunit (201 aa).

Serine 105 functions as the Nucleophile in the catalytic mechanism. Histidine 130 is a catalytic residue.

Belongs to the peptidase S14 family. Fourteen ClpP subunits assemble into 2 heptameric rings which stack back to back to give a disk-like structure with a central cavity, resembling the structure of eukaryotic proteasomes.

The protein resides in the cytoplasm. The catalysed reaction is Hydrolysis of proteins to small peptides in the presence of ATP and magnesium. alpha-casein is the usual test substrate. In the absence of ATP, only oligopeptides shorter than five residues are hydrolyzed (such as succinyl-Leu-Tyr-|-NHMec, and Leu-Tyr-Leu-|-Tyr-Trp, in which cleavage of the -Tyr-|-Leu- and -Tyr-|-Trp bonds also occurs).. In terms of biological role, cleaves peptides in various proteins in a process that requires ATP hydrolysis. Has a chymotrypsin-like activity. Plays a major role in the degradation of misfolded proteins. The protein is ATP-dependent Clp protease proteolytic subunit of Acinetobacter baylyi (strain ATCC 33305 / BD413 / ADP1).